The following is a 416-amino-acid chain: Cotranscriptional regulator ARB2A (416 aa).

Positions 1 to 18 (MSISLSSLILLPIWINMA) are cleaved as a signal peptide. The segment at 208–247 (KPKIHVQSSSDSSDEPAEKRERKDKVSKETKKRRDFYEKY) is disordered. A compositionally biased stretch (basic and acidic residues) spans 223 to 236 (PAEKRERKDKVSKE). Serine 293 functions as the Nucleophile in the catalytic mechanism. Positions 413-416 (HEEL) match the Prevents secretion from ER motif.

It belongs to the ARB2A family. In terms of assembly, interacts with AGO2. Found in a complex, composed of AGO2, CHD7 and ARB2A.

The protein resides in the nucleus. It localises to the cytoplasm. The protein localises to the endoplasmic reticulum. Its function is as follows. Plays a role in the regulation of alternative splicing, by interacting with AGO2 and CHD7. Seems to be required for stabilizing protein-protein interactions at the chromatin-spliceosome interface. May have hydrolase activity. This Homo sapiens (Human) protein is Cotranscriptional regulator ARB2A.